The following is a 382-amino-acid chain: uncharacterized protein (382 aa).

The next 12 helical transmembrane spans lie at 8-28 (VMLL…LNTL), 45-65 (MVSS…GYLI), 75-95 (YLAS…VGFW), 102-122 (FIAG…LMCS), 131-151 (LLAA…LLVS), 157-177 (LLHV…PLLF), 204-224 (LGVN…GLMP), 231-251 (GMAN…GILG), 270-290 (VQVF…AMAP), 291-311 (ALFI…AWAC), 325-345 (ALLL…AMLM), and 349-369 (SDNL…LMLL).

It belongs to the major facilitator superfamily. YcaD (TC 2.A.1.26) family.

It is found in the cell inner membrane. This is an uncharacterized protein from Salmonella newport (strain SL254).